Here is a 258-residue protein sequence, read N- to C-terminus: Isoprenyl transferase (258 aa).

The active site involves D38. D38 lines the Mg(2+) pocket. Substrate is bound by residues 39-42 (GNGR), W43, R51, H55, and 83-85 (STE). The active-site Proton acceptor is N86. Substrate contacts are provided by residues W87, R89, R206, and 212–214 (RIS). E225 provides a ligand contact to Mg(2+).

This sequence belongs to the UPP synthase family. In terms of assembly, homodimer. Requires Mg(2+) as cofactor.

Catalyzes the condensation of isopentenyl diphosphate (IPP) with allylic pyrophosphates generating different type of terpenoids. This is Isoprenyl transferase from Bacillus thuringiensis subsp. konkukian (strain 97-27).